The primary structure comprises 368 residues: Histidinol-phosphate aminotransferase (368 aa).

Residue K224 is modified to N6-(pyridoxal phosphate)lysine.

Belongs to the class-II pyridoxal-phosphate-dependent aminotransferase family. Histidinol-phosphate aminotransferase subfamily. Homodimer. It depends on pyridoxal 5'-phosphate as a cofactor.

The catalysed reaction is L-histidinol phosphate + 2-oxoglutarate = 3-(imidazol-4-yl)-2-oxopropyl phosphate + L-glutamate. Its pathway is amino-acid biosynthesis; L-histidine biosynthesis; L-histidine from 5-phospho-alpha-D-ribose 1-diphosphate: step 7/9. The sequence is that of Histidinol-phosphate aminotransferase from Agrobacterium fabrum (strain C58 / ATCC 33970) (Agrobacterium tumefaciens (strain C58)).